Consider the following 513-residue polypeptide: ATP synthase subunit alpha (513 aa).

169 to 176 is an ATP binding site; the sequence is GDRQTGKT.

It belongs to the ATPase alpha/beta chains family. As to quaternary structure, F-type ATPases have 2 components, CF(1) - the catalytic core - and CF(0) - the membrane proton channel. CF(1) has five subunits: alpha(3), beta(3), gamma(1), delta(1), epsilon(1). CF(0) has three main subunits: a(1), b(2) and c(9-12). The alpha and beta chains form an alternating ring which encloses part of the gamma chain. CF(1) is attached to CF(0) by a central stalk formed by the gamma and epsilon chains, while a peripheral stalk is formed by the delta and b chains.

Its subcellular location is the cell inner membrane. It carries out the reaction ATP + H2O + 4 H(+)(in) = ADP + phosphate + 5 H(+)(out). In terms of biological role, produces ATP from ADP in the presence of a proton gradient across the membrane. The alpha chain is a regulatory subunit. In Ralstonia nicotianae (strain ATCC BAA-1114 / GMI1000) (Ralstonia solanacearum), this protein is ATP synthase subunit alpha.